Consider the following 423-residue polypeptide: GPI mannosyltransferase 2 (423 aa).

The next 9 membrane-spanning stretches (helical) occupy residues 7 to 27 (LTLI…ILSG), 102 to 122 (VILG…LVLY), 128 to 148 (IFNP…PTAT), 151 to 171 (APYT…LLSI), 191 to 211 (TGIF…AHIF), 228 to 248 (FLSA…TETV), 298 to 318 (LAMP…SHLV), 333 to 353 (PPPI…LLLF), and 400 to 420 (YWIG…AGHY).

The protein belongs to the PIGV family.

Its subcellular location is the endoplasmic reticulum membrane. It functions in the pathway glycolipid biosynthesis; glycosylphosphatidylinositol-anchor biosynthesis. Mannosyltransferase involved in glycosylphosphatidylinositol-anchor biosynthesis. Transfers the second mannose to the glycosylphosphatidylinositol during GPI precursor assembly. This is GPI mannosyltransferase 2 (GPI18) from Cryptococcus neoformans var. neoformans serotype D (strain B-3501A) (Filobasidiella neoformans).